We begin with the raw amino-acid sequence, 206 residues long: Ribosomal RNA small subunit methyltransferase G (206 aa).

S-adenosyl-L-methionine is bound by residues Gly-73, Leu-78, 124–125, and Arg-139; that span reads VE.

Belongs to the methyltransferase superfamily. RNA methyltransferase RsmG family.

The protein resides in the cytoplasm. The enzyme catalyses guanosine(527) in 16S rRNA + S-adenosyl-L-methionine = N(7)-methylguanosine(527) in 16S rRNA + S-adenosyl-L-homocysteine. In terms of biological role, specifically methylates the N7 position of guanine in position 527 of 16S rRNA. This is Ribosomal RNA small subunit methyltransferase G from Pectobacterium atrosepticum (strain SCRI 1043 / ATCC BAA-672) (Erwinia carotovora subsp. atroseptica).